Reading from the N-terminus, the 368-residue chain is tRNA-specific 2-thiouridylase MnmA (368 aa).

Residues 11–18 and Met-37 each bind ATP; that span reads GMSGGVDS. The segment at 97-99 is interaction with target base in tRNA; that stretch reads NPD. Catalysis depends on Cys-102, which acts as the Nucleophile. Cys-102 and Cys-199 are disulfide-bonded. Position 127 (Gly-127) interacts with ATP. An interaction with tRNA region spans residues 149–151; it reads KDQ. Cys-199 functions as the Cysteine persulfide intermediate in the catalytic mechanism. The interval 311–312 is interaction with tRNA; sequence RY.

Belongs to the MnmA/TRMU family. In terms of assembly, interacts with TusE.

Its subcellular location is the cytoplasm. It catalyses the reaction S-sulfanyl-L-cysteinyl-[protein] + uridine(34) in tRNA + AH2 + ATP = 2-thiouridine(34) in tRNA + L-cysteinyl-[protein] + A + AMP + diphosphate + H(+). Catalyzes the 2-thiolation of uridine at the wobble position (U34) of tRNA(Lys), tRNA(Glu) and tRNA(Gln), leading to the formation of s(2)U34, the first step of tRNA-mnm(5)s(2)U34 synthesis. Sulfur is provided by IscS, via a sulfur-relay system. Binds ATP and its substrate tRNAs. This is tRNA-specific 2-thiouridylase MnmA from Salmonella arizonae (strain ATCC BAA-731 / CDC346-86 / RSK2980).